Reading from the N-terminus, the 432-residue chain is Adenylosuccinate synthetase (432 aa).

GTP is bound by residues 13 to 19 and 41 to 43; these read GDEGKGK and GHT. Aspartate 14 functions as the Proton acceptor in the catalytic mechanism. Aspartate 14 and glycine 41 together coordinate Mg(2+). IMP contacts are provided by residues 14 to 17, 39 to 42, threonine 130, arginine 144, glutamine 225, threonine 240, and arginine 304; these read DEGK and NAGH. The Proton donor role is filled by histidine 42. 300 to 306 contributes to the substrate binding site; that stretch reads AVTGRPR. Residues arginine 306, 332–334, and 415–417 each bind GTP; these read KLD and STG.

This sequence belongs to the adenylosuccinate synthetase family. Homodimer. Mg(2+) is required as a cofactor.

Its subcellular location is the cytoplasm. The enzyme catalyses IMP + L-aspartate + GTP = N(6)-(1,2-dicarboxyethyl)-AMP + GDP + phosphate + 2 H(+). Its pathway is purine metabolism; AMP biosynthesis via de novo pathway; AMP from IMP: step 1/2. Its function is as follows. Plays an important role in the de novo pathway of purine nucleotide biosynthesis. Catalyzes the first committed step in the biosynthesis of AMP from IMP. The chain is Adenylosuccinate synthetase from Haemophilus ducreyi (strain 35000HP / ATCC 700724).